The chain runs to 115 residues: Small ribosomal subunit protein uS14m (115 aa).

It belongs to the universal ribosomal protein uS14 family. In terms of assembly, component of the mitochondrial small ribosomal subunit (mt-SSU). Mature yeast 74S mitochondrial ribosomes consist of a small (37S) and a large (54S) subunit. The 37S small subunit contains a 15S ribosomal RNA (15S mt-rRNA) and 34 different proteins. The 54S large subunit contains a 21S rRNA (21S mt-rRNA) and 46 different proteins.

Its subcellular location is the mitochondrion. Component of the mitochondrial ribosome (mitoribosome), a dedicated translation machinery responsible for the synthesis of mitochondrial genome-encoded proteins, including at least some of the essential transmembrane subunits of the mitochondrial respiratory chain. The mitoribosomes are attached to the mitochondrial inner membrane and translation products are cotranslationally integrated into the membrane. The polypeptide is Small ribosomal subunit protein uS14m (MRP2) (Saccharomyces cerevisiae (strain ATCC 204508 / S288c) (Baker's yeast)).